The following is a 223-amino-acid chain: Triosephosphate isomerase (223 aa).

6-8 (NLK) is a substrate binding site. The Electrophile role is filled by histidine 86. The Proton acceptor role is filled by glutamate 151. Glycine 157 and serine 187 together coordinate substrate.

This sequence belongs to the triosephosphate isomerase family. In terms of assembly, homodimer.

It is found in the cytoplasm. It carries out the reaction D-glyceraldehyde 3-phosphate = dihydroxyacetone phosphate. It functions in the pathway carbohydrate biosynthesis; gluconeogenesis. The protein operates within carbohydrate degradation; glycolysis; D-glyceraldehyde 3-phosphate from glycerone phosphate: step 1/1. Its function is as follows. Involved in the gluconeogenesis. Catalyzes stereospecifically the conversion of dihydroxyacetone phosphate (DHAP) to D-glyceraldehyde-3-phosphate (G3P). The polypeptide is Triosephosphate isomerase (Campylobacter jejuni subsp. jejuni serotype O:2 (strain ATCC 700819 / NCTC 11168)).